The primary structure comprises 308 residues: NADH-cytochrome b5 reductase 1 (308 aa).

The chain crosses the membrane as a helical span at residues 29-49 (VASSPAFLVAAAAIVIAAAFY). Residues 64 to 167 (SIWKEFPLQK…KGPKGNFKYT (104 aa)) enclose the FAD-binding FR-type domain. Residues 147–162 (ASLK…GPKG) and 173–205 (HLGM…NITL) contribute to the FAD site.

The protein belongs to the flavoprotein pyridine nucleotide cytochrome reductase family. Monomer. Component of the 2-(3-amino-3-carboxypropyl)histidine synthase complex composed of DPH1, DPH2, DPH3 and a NADH-dependent reductase, predominantly MCR1.1. It depends on FAD as a cofactor.

It is found in the mitochondrion outer membrane. The enzyme catalyses 2 Fe(III)-[cytochrome b5] + NADH = 2 Fe(II)-[cytochrome b5] + NAD(+) + H(+). The catalysed reaction is 2 Fe(3+)-[Dph3] + NADH = 2 Fe(2+)-[Dph3] + NAD(+) + H(+). It functions in the pathway protein modification; peptidyl-diphthamide biosynthesis. Its function is as follows. NADH-dependent reductase for DPH3 and cytochrome b5. Required for the first step of diphthamide biosynthesis, a post-translational modification of histidine which occurs in elongation factor 2. DPH1 and DPH2 transfer a 3-amino-3-carboxypropyl (ACP) group from S-adenosyl-L-methionine (SAM) to a histidine residue, the reaction is assisted by a reduction system comprising DPH3 and a NADH-dependent reductase, predominantly MCR1.1. By reducing DPH3, also involved in the formation of the tRNA wobble base modification mcm5s 2U (5-methoxycarbonylmethyl-2-thiouridine), mediated by the elongator complex. The cytochrome b5/NADH cytochrome b5 reductase electron transfer system supports the catalytic activity of several sterol biosynthetic enzymes. The sequence is that of NADH-cytochrome b5 reductase 1 (MCR1.1) from Laccaria bicolor (strain S238N-H82 / ATCC MYA-4686) (Bicoloured deceiver).